The primary structure comprises 362 residues: MKNLNKNTKIIVGLSGGVDSSVTALLLLKQGYQVEALFMKNWEEDDKGRYCSAKQDLSDAQNITNKLSIKLHTINFSVDYWNDVFTHFLKEYKKGRTPNPDILCNQKIKFGAFLKHAISLGADKIATGHYARIAKKNGTYQLKTGLDNNKDQSYFLHLLSQYQLSKSLFPLGETNKIDVRNIATENGFVTAKKKDSTGICFIGERKFSEFLATYLPKQQGNIVGEQGQFIKHHQGLAFYTIGQRKGLEIGGGFGKSGKPWFVADKCIERNELVVVQGDHTLLYYQTLNTSKPYWINTPPTLPMTCNAKIRYRQQSQSCMISQDNNKQLKIIFKQPQRAITPGQSIVFYDNETCLGGAIIEYR.

ATP contacts are provided by residues 13 to 20 (GLSGGVDS) and M39. Positions 99 to 101 (NPD) are interaction with target base in tRNA. C104 (nucleophile) is an active-site residue. A disulfide bridge connects residues C104 and C200. Residue G128 coordinates ATP. The interval 150 to 152 (KDQ) is interaction with tRNA. Residue C200 is the Cysteine persulfide intermediate of the active site. The tract at residues 310-311 (RY) is interaction with tRNA.

This sequence belongs to the MnmA/TRMU family.

It is found in the cytoplasm. It carries out the reaction S-sulfanyl-L-cysteinyl-[protein] + uridine(34) in tRNA + AH2 + ATP = 2-thiouridine(34) in tRNA + L-cysteinyl-[protein] + A + AMP + diphosphate + H(+). Its function is as follows. Catalyzes the 2-thiolation of uridine at the wobble position (U34) of tRNA, leading to the formation of s(2)U34. This is tRNA-specific 2-thiouridylase MnmA from Vesicomyosocius okutanii subsp. Calyptogena okutanii (strain HA).